The chain runs to 156 residues: Small ribosomal subunit protein uS7 (156 aa).

Belongs to the universal ribosomal protein uS7 family. Part of the 30S ribosomal subunit. Contacts proteins S9 and S11.

One of the primary rRNA binding proteins, it binds directly to 16S rRNA where it nucleates assembly of the head domain of the 30S subunit. Is located at the subunit interface close to the decoding center, probably blocks exit of the E-site tRNA. The sequence is that of Small ribosomal subunit protein uS7 from Mycobacterium sp. (strain JLS).